We begin with the raw amino-acid sequence, 354 residues long: Methylthioribose-1-phosphate isomerase (354 aa).

Residues 58 to 60, arginine 101, and glutamine 204 each bind substrate; that span reads RGA. The active-site Proton donor is aspartate 245. 255 to 256 lines the substrate pocket; the sequence is NK.

The protein belongs to the eIF-2B alpha/beta/delta subunits family. MtnA subfamily.

The catalysed reaction is 5-(methylsulfanyl)-alpha-D-ribose 1-phosphate = 5-(methylsulfanyl)-D-ribulose 1-phosphate. It participates in amino-acid biosynthesis; L-methionine biosynthesis via salvage pathway; L-methionine from S-methyl-5-thio-alpha-D-ribose 1-phosphate: step 1/6. Catalyzes the interconversion of methylthioribose-1-phosphate (MTR-1-P) into methylthioribulose-1-phosphate (MTRu-1-P). This chain is Methylthioribose-1-phosphate isomerase, found in Stenotrophomonas maltophilia (strain R551-3).